A 60-amino-acid chain; its full sequence is Metallothionein A (60 aa).

The beta stretch occupies residues 1 to 28 (MDPCQCSKSGTCNCGGSCTCTNCSCKSC). A divalent metal cation is bound by residues Cys4, Cys6, Cys12, Cys14, Cys18, Cys20, Cys23, Cys25, Cys28, Cys32, Cys33, Cys35, Cys36, Cys40, Cys43, Cys47, Cys49, Cys54, Cys58, and Cys59. The segment at 29–60 (KKSCCPCCPSGCTKCASGCVCKGKTCDTSCCQ) is alpha.

Belongs to the metallothionein superfamily. Type 1 family.

Metallothioneins have a high content of cysteine residues that bind various heavy metals. The chain is Metallothionein A (mta) from Trematomus bernacchii (Emerald rockcod).